Consider the following 152-residue polypeptide: MIALIQRVKRADVRVGERVTGEIGPGLLALVCAERGDTEAAADKLLAKVLGYRVFSDAAGKMNLPVSNLDGAGRAGGLLLVSQFTLAADTNSGLRPSFTPAAPPDEGERLFDYFVRRARERHPIVATGEFGADMQVSLVNDGPVTFWLQTRA.

The short motif at 142 to 143 (GP) is the Gly-cisPro motif, important for rejection of L-amino acids element.

This sequence belongs to the DTD family. Homodimer.

It localises to the cytoplasm. The enzyme catalyses glycyl-tRNA(Ala) + H2O = tRNA(Ala) + glycine + H(+). It catalyses the reaction a D-aminoacyl-tRNA + H2O = a tRNA + a D-alpha-amino acid + H(+). An aminoacyl-tRNA editing enzyme that deacylates mischarged D-aminoacyl-tRNAs. Also deacylates mischarged glycyl-tRNA(Ala), protecting cells against glycine mischarging by AlaRS. Acts via tRNA-based rather than protein-based catalysis; rejects L-amino acids rather than detecting D-amino acids in the active site. By recycling D-aminoacyl-tRNA to D-amino acids and free tRNA molecules, this enzyme counteracts the toxicity associated with the formation of D-aminoacyl-tRNA entities in vivo and helps enforce protein L-homochirality. The protein is D-aminoacyl-tRNA deacylase of Burkholderia mallei (strain NCTC 10247).